We begin with the raw amino-acid sequence, 33 residues long: Brevinin-2JD (33 aa).

Residues Cys27 and Cys33 are joined by a disulfide bond.

In terms of tissue distribution, expressed by the skin glands.

It is found in the secreted. Has antibacterial activity against E.coli ATCC 25992 (MIC=38 uM), E.coli CIB 84492 (MIC=38 uM), S.aureus ATCC 25923 (MIC=19 uM) and S.aureus CIB 85462 (MIC=19 uM). Has antifungal activity against C.albicans (MIC=19 uM). Has weak hemolytic activity against rabbit erythrocytes. The sequence is that of Brevinin-2JD from Odorrana jingdongensis (Jingdong frog).